An 87-amino-acid polypeptide reads, in one-letter code: MDQLNVKEQQEFQQIVEQKQMKDFMNLYSNLVSRCFDDCVNDFTSNSLTSKETSCIAKCSEKFLKHSERVGQRFQEQNALLMQQGPK.

Positions C35–C59 match the Twin CX3C motif motif. 2 disulfides stabilise this stretch: C35-C59 and C39-C55.

This sequence belongs to the small Tim family. Heterohexamer; composed of 3 copies of TIM9 and 3 copies of TIM10, named soluble 70 kDa complex. Associates with the TIM22 complex, whose core is composed of TIM22 and TIM54. Interacts with the transmembrane regions of multi-pass transmembrane proteins in transit.

The protein localises to the mitochondrion inner membrane. Its function is as follows. Mitochondrial intermembrane chaperone that participates in the import and insertion of multi-pass transmembrane proteins into the mitochondrial inner membrane. Also required for the transfer of beta-barrel precursors from the TOM complex to the sorting and assembly machinery (SAM complex) of the outer membrane. Acts as a chaperone-like protein that protects the hydrophobic precursors from aggregation and guide them through the mitochondrial intermembrane space. This is Mitochondrial import inner membrane translocase subunit TIM9 (TIM9) from Candida albicans (strain SC5314 / ATCC MYA-2876) (Yeast).